The following is a 189-amino-acid chain: Glycerol-3-phosphate acyltransferase (189 aa).

The next 5 membrane-spanning stretches (helical) occupy residues 1-21 (MVWL…AVLL), 50-70 (KLAI…VLVA), 72-92 (WLGL…IGHL), 111-131 (MLLG…LLTF), and 151-171 (LLAW…GLIV).

Belongs to the PlsY family. As to quaternary structure, probably interacts with PlsX.

Its subcellular location is the cell inner membrane. The catalysed reaction is an acyl phosphate + sn-glycerol 3-phosphate = a 1-acyl-sn-glycero-3-phosphate + phosphate. It participates in lipid metabolism; phospholipid metabolism. In terms of biological role, catalyzes the transfer of an acyl group from acyl-phosphate (acyl-PO(4)) to glycerol-3-phosphate (G3P) to form lysophosphatidic acid (LPA). This enzyme utilizes acyl-phosphate as fatty acyl donor, but not acyl-CoA or acyl-ACP. In Pseudomonas aeruginosa (strain LESB58), this protein is Glycerol-3-phosphate acyltransferase.